Reading from the N-terminus, the 194-residue chain is Orotate phosphoribosyltransferase (194 aa).

114–122 is a 5-phospho-alpha-D-ribose 1-diphosphate binding site; sequence EDVVTTGKS. The orotate site is built by T118 and R146.

It belongs to the purine/pyrimidine phosphoribosyltransferase family. PyrE subfamily. In terms of assembly, homodimer. Requires Mg(2+) as cofactor.

The catalysed reaction is orotidine 5'-phosphate + diphosphate = orotate + 5-phospho-alpha-D-ribose 1-diphosphate. The protein operates within pyrimidine metabolism; UMP biosynthesis via de novo pathway; UMP from orotate: step 1/2. Catalyzes the transfer of a ribosyl phosphate group from 5-phosphoribose 1-diphosphate to orotate, leading to the formation of orotidine monophosphate (OMP). The polypeptide is Orotate phosphoribosyltransferase (Clostridioides difficile (strain 630) (Peptoclostridium difficile)).